The chain runs to 740 residues: DNA polymerase iota (740 aa).

The disordered stretch occupies residues 1–21; that stretch reads MEKLGVEPEEEGGGDDDEEDA. Over residues 7–21 the composition is skewed to acidic residues; sequence EPEEEGGGDDDEEDA. The UmuC domain maps to 55-268; it reads IVHVDLDCFY…NHIKEIPGIG (214 aa). Residues Asp59 and Leu60 each contribute to the Mg(2+) site. 2 residues coordinate Mn(2+): Asp59 and Leu60. A 2'-deoxyribonucleoside 5'-triphosphate contacts are provided by Tyr64 and Arg96. Asp151 is a Mg(2+) binding site. A Mn(2+)-binding site is contributed by Asp151. The active-site Proton acceptor is Glu152. 2 DNA-binding regions span residues 249–314 and 325–439; these read ESCQ…FGED and QSFS…CNLK. The short motif at 527–544 is the Ubiquitin-binding 1 (UBM1) element; it reads VDQEVFKQLPVDIQEEIL. 2 disordered regions span residues 581-615 and 671-704; these read PINPRDHLSSSKQVSSVSPCEPGTSGFNSSSSSYM and NHTTDSHKQTVATDSHEGLTENREPDSVDEKITF. The segment covering 605–615 has biased composition (low complexity); it reads SGFNSSSSSYM. Residues 672–702 are compositionally biased toward basic and acidic residues; the sequence is HTTDSHKQTVATDSHEGLTENREPDSVDEKI. The Ubiquitin-binding 2 (UBM2) motif lies at 708–725; the sequence is IDPQVFYELPEAVQKELL.

Belongs to the DNA polymerase type-Y family. As to quaternary structure, interacts with POLH. Interacts with REV1. Interacts with ubiquitin. Requires Mg(2+) as cofactor. Mn(2+) serves as cofactor. Monoubiquitinated. Protein monoubiquitination prevents POLI binding to ubiquitin via the ubiquitin-binding motif 1 and ubiquitin-binding motif 2. Ubiquitous. Highly expressed in testis.

It localises to the nucleus. It catalyses the reaction DNA(n) + a 2'-deoxyribonucleoside 5'-triphosphate = DNA(n+1) + diphosphate. Error-prone DNA polymerase specifically involved in DNA repair. Plays an important role in translesion synthesis, where the normal high-fidelity DNA polymerases cannot proceed and DNA synthesis stalls. Favors Hoogsteen base-pairing in the active site. Inserts the correct base with high-fidelity opposite an adenosine template. Exhibits low fidelity and efficiency opposite a thymidine template, where it will preferentially insert guanosine. May play a role in hypermutation of immunoglobulin genes. Forms a Schiff base with 5'-deoxyribose phosphate at abasic sites, but may not have lyase activity. The protein is DNA polymerase iota (POLI) of Homo sapiens (Human).